The primary structure comprises 258 residues: Small ribosomal subunit protein uS2 (258 aa).

The tract at residues 227-258 is disordered; sequence GEQFAPASEQKEEVKTQEVQEVEDSNDDVIDD. Residues 235 to 244 are compositionally biased toward basic and acidic residues; sequence EQKEEVKTQE. Positions 246–258 are enriched in acidic residues; sequence QEVEDSNDDVIDD.

The protein belongs to the universal ribosomal protein uS2 family.

The polypeptide is Small ribosomal subunit protein uS2 (Caldicellulosiruptor saccharolyticus (strain ATCC 43494 / DSM 8903 / Tp8T 6331)).